Reading from the N-terminus, the 155-residue chain is Cyanate hydratase (155 aa).

Residues Arg95, Glu98, and Ser121 contribute to the active site.

It belongs to the cyanase family.

It catalyses the reaction cyanate + hydrogencarbonate + 3 H(+) = NH4(+) + 2 CO2. Its function is as follows. Catalyzes the reaction of cyanate with bicarbonate to produce ammonia and carbon dioxide. The chain is Cyanate hydratase from Pseudomonas syringae pv. syringae (strain B728a).